A 413-amino-acid chain; its full sequence is Eukaryotic initiation factor 4A-14 (413 aa).

Positions 40–68 (DSFDAMGLQENLLRGIYAYGFEKPSAIQQ) match the Q motif motif. The Helicase ATP-binding domain occupies 71 to 241 (IVPFCKGLDV…RKFMSKPVRI (171 aa)). 84–91 (AQSGTGKT) lines the ATP pocket. Residues 189-192 (DEAD) carry the DEAD box motif. A Helicase C-terminal domain is found at 252–413 (GIKQFYVNVD…ELPANVADLL (162 aa)).

This sequence belongs to the DEAD box helicase family. eIF4A subfamily. As to quaternary structure, eIF4F is a multi-subunit complex, the composition of which varies with external and internal environmental conditions. It is composed of at least EIF4A, EIF4E and EIF4G.

It carries out the reaction ATP + H2O = ADP + phosphate + H(+). ATP-dependent RNA helicase which is a subunit of the eIF4F complex involved in cap recognition and is required for mRNA binding to ribosome. In the current model of translation initiation, eIF4A unwinds RNA secondary structures in the 5'-UTR of mRNAs which is necessary to allow efficient binding of the small ribosomal subunit, and subsequent scanning for the initiator codon. The sequence is that of Eukaryotic initiation factor 4A-14 from Nicotiana tabacum (Common tobacco).